Reading from the N-terminus, the 380-residue chain is cAMP-dependent protein kinase type I-alpha regulatory subunit (380 aa).

The residue at position 1 (Met1) is an N-acetylmethionine. Ala2 is modified (N-acetylalanine; in cAMP-dependent protein kinase type I-alpha regulatory subunit, N-terminally processed). The dimerization and phosphorylation stretch occupies residues 2-135 (ASGSTASEEE…ALAKAIEKNV (134 aa)). A phosphoserine mark is found at Ser3, Ser76, and Ser82. The segment at 64 to 96 (IQNLQKASARADSREDEISPPPPNPVVKGRRRR) is disordered. The Pseudophosphorylation motif signature appears at 95 to 99 (RRGAI). Position 100 is a phosphoserine (Ser100). 3',5'-cyclic AMP contacts are provided by residues 136–253 (LFSH…SKVS), Glu201, Arg210, 254–380 (ILES…SLSV), Glu325, and Arg334. Ser257 carries the phosphoserine modification.

This sequence belongs to the cAMP-dependent kinase regulatory chain family. The inactive holoenzyme is composed of two regulatory chains and two catalytic chains. Activation by cAMP releases the two active catalytic monomers and the regulatory dimer. Interacts with PRKACA and PRKACB. PRKAR1A also interacts with RFC2; the complex may be involved in cell survival. Interacts with AKAP4. Interacts with RARA; the interaction occurs in the presence of cAMP or FSH and regulates RARA transcriptional activity. Interacts with the phosphorylated form of PJA2. Interacts with CBFA2T3. Interacts with PRKX; regulates this cAMP-dependent protein kinase. Interacts with smAKAP; this interaction may target PRKAR1A to the plasma membrane. Interacts with AICDA. In terms of processing, the pseudophosphorylation site binds to the substrate-binding region of the catalytic chain, resulting in the inhibition of its activity. In terms of tissue distribution, four types of regulatory chains are found: I-alpha, I-beta, II-alpha, and II-beta. Their expression varies among tissues and is in some cases constitutive and in others inducible.

The protein localises to the cell membrane. Functionally, regulatory subunit of the cAMP-dependent protein kinases involved in cAMP signaling in cells. The protein is cAMP-dependent protein kinase type I-alpha regulatory subunit (PRKAR1A) of Sus scrofa (Pig).